The primary structure comprises 203 residues: Glycerol-3-phosphate acyltransferase (203 aa).

A run of 4 helical transmembrane segments spans residues 4 to 24 (LVLL…AVLI), 80 to 100 (PFLL…PIFF), 116 to 136 (APIG…TVFI), and 138 to 158 (GYSS…TWFV).

Belongs to the PlsY family. In terms of assembly, probably interacts with PlsX.

It localises to the cell inner membrane. It carries out the reaction an acyl phosphate + sn-glycerol 3-phosphate = a 1-acyl-sn-glycero-3-phosphate + phosphate. It participates in lipid metabolism; phospholipid metabolism. Its function is as follows. Catalyzes the transfer of an acyl group from acyl-phosphate (acyl-PO(4)) to glycerol-3-phosphate (G3P) to form lysophosphatidic acid (LPA). This enzyme utilizes acyl-phosphate as fatty acyl donor, but not acyl-CoA or acyl-ACP. In Photobacterium profundum (strain SS9), this protein is Glycerol-3-phosphate acyltransferase.